The following is a 513-amino-acid chain: Zinc finger CCCH-type with G patch domain-containing protein (513 aa).

A C3H1-type zinc finger spans residues 155–178 (PCSYYLEGECRFDETKCRFSHGAL). 2 stretches are compositionally biased toward acidic residues: residues 252-261 (DQDEDDELSS) and 271-283 (DSSD…MDDL). The tract at residues 252 to 283 (DQDEDDELSSEESNSSMNDDSSDEAESDMDDL) is disordered. A G-patch domain is found at 312-358 (TRGIGSKLMEKMGYIHGTGLGSDGRGIVTPVSAQILPQGRSLDACME). A compositionally biased stretch (basic and acidic residues) spans 455–467 (DMAKVKQSLDRNS). The tract at residues 455–513 (DMAKVKQSLDRNSGDAQLQKRLQVQMESHKQELATLQAQERSLSKEQQTRKSKNKMFEF) is disordered. The segment covering 468–480 (GDAQLQKRLQVQM) has biased composition (polar residues). The span at 496 to 513 (SLSKEQQTRKSKNKMFEF) shows a compositional bias: basic and acidic residues.

It is found in the nucleus. In terms of biological role, transcription repressor. The chain is Zinc finger CCCH-type with G patch domain-containing protein from Drosophila yakuba (Fruit fly).